The following is a 451-amino-acid chain: Probable NADH dehydrogenase (451 aa).

41–71 (KLIILGCGWGSYSFLKNLNSIKYDITVISPR) serves as a coordination point for FAD. 199–236 (LSFVIVGGGATGIEFTSELNDFFSEDLSRLFPFVPVNE) is an NAD(+) binding site.

It belongs to the NADH dehydrogenase family. FAD is required as a cofactor.

It carries out the reaction a ubiquinone + NADH + 5 H(+)(in) = a ubiquinol + NAD(+) + 4 H(+)(out). The chain is Probable NADH dehydrogenase from Dictyostelium discoideum (Social amoeba).